Here is a 272-residue protein sequence, read N- to C-terminus: Putative pyruvate, phosphate dikinase regulatory protein (272 aa).

ADP is bound at residue 149 to 156 (GVSRTSKT).

This sequence belongs to the pyruvate, phosphate/water dikinase regulatory protein family. PDRP subfamily.

It carries out the reaction N(tele)-phospho-L-histidyl/L-threonyl-[pyruvate, phosphate dikinase] + ADP = N(tele)-phospho-L-histidyl/O-phospho-L-threonyl-[pyruvate, phosphate dikinase] + AMP + H(+). It catalyses the reaction N(tele)-phospho-L-histidyl/O-phospho-L-threonyl-[pyruvate, phosphate dikinase] + phosphate + H(+) = N(tele)-phospho-L-histidyl/L-threonyl-[pyruvate, phosphate dikinase] + diphosphate. In terms of biological role, bifunctional serine/threonine kinase and phosphorylase involved in the regulation of the pyruvate, phosphate dikinase (PPDK) by catalyzing its phosphorylation/dephosphorylation. The protein is Putative pyruvate, phosphate dikinase regulatory protein of Lactiplantibacillus plantarum (strain ATCC BAA-793 / NCIMB 8826 / WCFS1) (Lactobacillus plantarum).